A 252-amino-acid polypeptide reads, in one-letter code: Indole-3-glycerol phosphate synthase (252 aa).

The protein belongs to the TrpC family.

It catalyses the reaction 1-(2-carboxyphenylamino)-1-deoxy-D-ribulose 5-phosphate + H(+) = (1S,2R)-1-C-(indol-3-yl)glycerol 3-phosphate + CO2 + H2O. It functions in the pathway amino-acid biosynthesis; L-tryptophan biosynthesis; L-tryptophan from chorismate: step 4/5. This Listeria monocytogenes serotype 4a (strain HCC23) protein is Indole-3-glycerol phosphate synthase.